Consider the following 647-residue polypeptide: Threonine--tRNA ligase (647 aa).

A TGS domain is found at 1–61 (MIKITFPDGA…EEDGSIEIVT (61 aa)). Residues 240 to 538 (DHRKLGKELD…LIETYKGAFP (299 aa)) are catalytic. Cysteine 334, histidine 385, and histidine 515 together coordinate Zn(2+).

It belongs to the class-II aminoacyl-tRNA synthetase family. Homodimer. The cofactor is Zn(2+).

The protein localises to the cytoplasm. The enzyme catalyses tRNA(Thr) + L-threonine + ATP = L-threonyl-tRNA(Thr) + AMP + diphosphate + H(+). Its function is as follows. Catalyzes the attachment of threonine to tRNA(Thr) in a two-step reaction: L-threonine is first activated by ATP to form Thr-AMP and then transferred to the acceptor end of tRNA(Thr). Also edits incorrectly charged L-seryl-tRNA(Thr). The protein is Threonine--tRNA ligase of Streptococcus pyogenes serotype M3 (strain ATCC BAA-595 / MGAS315).